A 141-amino-acid polypeptide reads, in one-letter code: Eukaryotic translation initiation factor 1A (141 aa).

The span at 1 to 15 (MPKNKGKGGKNRRRG) shows a compositional bias: basic residues. The disordered stretch occupies residues 1–28 (MPKNKGKGGKNRRRGKNENEQKRELQFK). Positions 16-28 (KNENEQKRELQFK) are enriched in basic and acidic residues. Positions 21-95 (QKRELQFKEE…DKADVILRYN (75 aa)) constitute an S1-like domain.

This sequence belongs to the eIF-1A family.

Functionally, seems to be required for maximal rate of protein biosynthesis. Enhances ribosome dissociation into subunits and stabilizes the binding of the initiator Met-tRNA(I) to 40 S ribosomal subunits. This is Eukaryotic translation initiation factor 1A (eif1a) from Dictyostelium discoideum (Social amoeba).